A 549-amino-acid chain; its full sequence is Indole-3-acetic acid-amido synthetase GH3.2 (549 aa).

Belongs to the IAA-amido conjugating enzyme family. In terms of tissue distribution, expressed in flowers, pollen, cotyledons, stipules, true leaves, hypocotyls, and all parts of the roots except for the primary root tips.

In terms of biological role, catalyzes the synthesis of indole-3-acetic acid (IAA)-amino acid conjugates, providing a mechanism for the plant to cope with the presence of excess auxin. Strongly reactive with Glu, Gln, Trp, Asp, Ala, Leu, Phe, Gly, Tyr, Met, Ile and Val. Little or no product formation with His, Ser, Thr, Arg, Lys, or Cys. Also active on pyruvic and butyric acid analogs of IAA, PAA and the synthetic auxin naphthaleneacetic acid (NAA). The two chlorinated synthetic auxin herbicides 2,4-D and 3,6-dichloro-o-anisic acid (dicamba) cannot be used as substrates. The chain is Indole-3-acetic acid-amido synthetase GH3.2 (GH3.2) from Arabidopsis thaliana (Mouse-ear cress).